We begin with the raw amino-acid sequence, 263 residues long: Acetylglutamate kinase (263 aa).

Substrate-binding positions include 48–49, arginine 70, and asparagine 162; that span reads GG.

This sequence belongs to the acetylglutamate kinase family. ArgB subfamily.

The protein localises to the cytoplasm. It carries out the reaction N-acetyl-L-glutamate + ATP = N-acetyl-L-glutamyl 5-phosphate + ADP. The protein operates within amino-acid biosynthesis; L-arginine biosynthesis; N(2)-acetyl-L-ornithine from L-glutamate: step 2/4. Functionally, catalyzes the ATP-dependent phosphorylation of N-acetyl-L-glutamate. The sequence is that of Acetylglutamate kinase from Vibrio parahaemolyticus serotype O3:K6 (strain RIMD 2210633).